A 383-amino-acid polypeptide reads, in one-letter code: U-box domain-containing protein 63 (383 aa).

A disordered region spans residues 166-186 (PDGNVSNSHRNTQQKRDFASV). Residues 201 to 273 (SLKAILSDPV…HAFRQEEDSD (73 aa)) form the U-box domain.

It catalyses the reaction S-ubiquitinyl-[E2 ubiquitin-conjugating enzyme]-L-cysteine + [acceptor protein]-L-lysine = [E2 ubiquitin-conjugating enzyme]-L-cysteine + N(6)-ubiquitinyl-[acceptor protein]-L-lysine.. It participates in protein modification; protein ubiquitination. Functionally, functions as an E3 ubiquitin ligase. The chain is U-box domain-containing protein 63 (PUB63) from Arabidopsis thaliana (Mouse-ear cress).